Here is a 472-residue protein sequence, read N- to C-terminus: Transmembrane protein 8B (472 aa).

The tract at residues 1 to 36 (MNMPQSLGNQPLPPEPPSLGTPAEGPGTTSPPEHCW) is disordered. Residues 1 to 233 (MNMPQSLGNQ…ADALTYGFQL (233 aa)) are Extracellular-facing. N-linked (GlcNAc...) asparagine glycosylation is found at asparagine 92 and asparagine 100. Residues 182 to 221 (FLSPCVDDCGPYGQCKLLRTHNYLYAACECKAGWRGWGCT) enclose the EGF-like domain. 3 cysteine pairs are disulfide-bonded: cysteine 186–cysteine 196, cysteine 190–cysteine 209, and cysteine 211–cysteine 220. The helical transmembrane segment at 234–254 (LSTLLLCLSNLMFLPPVVLAI) threads the bilayer. Over 255–257 (RSR) the chain is Cytoplasmic. The helical transmembrane segment at 258–277 (YVLEAAVYTFTMFFSTFYHA) threads the bilayer. Topologically, residues 278–292 (CDQPGIVVFCIMDYD) are extracellular. The helical transmembrane segment at 293–313 (VLQFCDFLGSLMSVWVTVIAM) threads the bilayer. At 314–315 (AR) the chain is on the cytoplasmic side. The helical transmembrane segment at 316 to 336 (LQPVVKQVLYLLGAMLLSMAL) threads the bilayer. The Extracellular segment spans residues 337-342 (QLDRHG). A helical membrane pass occupies residues 343-363 (LWNLLGPSLFALGILATAWTV). The Cytoplasmic portion of the chain corresponds to 364 to 379 (RSVRRRHCYPPTWRRW). A helical membrane pass occupies residues 380–400 (LFYLCPGSLIAGSAVLLYAFV). At 401 to 405 (ETRDN) the chain is on the extracellular side. Residues 406-426 (YFYIHSIWHMLIAGSVGFLLP) traverse the membrane as a helical segment. Residues 427–472 (PRAKTDHGVPSGARARGCGYQLCINEQEELGLVGPGGATVSSICAS) are Cytoplasmic-facing.

The protein belongs to the TMEM8 family. Isoform 2 (via its cytoplasmic part) interacts with EZR. Post-translationally, isoform 2 is N-glycosylated.

The protein localises to the cell membrane. Its subcellular location is the cytoplasm. It is found in the nucleus. The protein resides in the mitochondrion. It localises to the endoplasmic reticulum. Functionally, may function as a regulator of the EGFR pathway. Probable tumor suppressor which may function in cell growth, proliferation and adhesion. The protein is Transmembrane protein 8B (TMEM8B) of Homo sapiens (Human).